The following is a 211-amino-acid chain: Bacteriorhodopsin (211 aa).

Residues 1 to 19 traverse the membrane as a helical segment; that stretch reads IWLWLGTAGMFLGMLYFIA. The Cytoplasmic segment spans residues 20–33; sequence RGWGETDSRRQKFY. Residues 34–52 form a helical membrane-spanning segment; that stretch reads IATILITAIAFVNYLAMAL. Topologically, residues 53-68 are extracellular; it reads GFGLTIVEFAGEEHPI. A helical transmembrane segment spans residues 69 to 86; that stretch reads YWARYSDWLFTTPLLLYD. Residues 87 to 97 are Cytoplasmic-facing; the sequence is LGLLAGADRNT. A helical membrane pass occupies residues 98-117; it reads ITSLVSLDVLMIGTGLVATL. Topologically, residues 118 to 130 are extracellular; sequence SAGSGVLSAGAER. Residues 131 to 150 traverse the membrane as a helical segment; it reads LVWWGISTAFLLVLLYFLFS. The Cytoplasmic portion of the chain corresponds to 151–168; that stretch reads SLSGRVADLPSDTRSTFK. A helical membrane pass occupies residues 169–187; the sequence is TLRNLVTVVWLVYPVWWLI. Topologically, residues 188 to 199 are extracellular; it reads GTEGIGLVGIGI. A helical membrane pass occupies residues 200-211; that stretch reads ETAGFMVIDLTA.

This sequence belongs to the archaeal/bacterial/fungal opsin family.

The protein localises to the cell membrane. Light-driven proton pump. In Halobacterium halobium (strain port), this protein is Bacteriorhodopsin (bop).